Here is a 257-residue protein sequence, read N- to C-terminus: MRRPVVMGNWKLNGSKAMVTDLLNGLNAELEGVEGVDVVVAPPAMYLDLAERLIKEGGNKLILGAQNTDTHNSGAYTGDMSPAMLKDFGASHIIIGHSERRDYHKESDEFVAKKFAFLKENGLTPVFCIGETEAQNEAGETEAVCARQINAVIDAYGVEALNGAIIAYEPIWAIGTGKAATADDAQRIHASIRALIAAKDAAVAEQVIIQYGGSVKPENAASYFAQPDIDGALVGGASLDAKGFAAIAKAAAEAKKA.

A substrate-binding site is contributed by 9-11 (NWK). The active-site Electrophile is the His97. Glu169 functions as the Proton acceptor in the catalytic mechanism. Residues Gly175, Ser214, and 235–236 (GG) each bind substrate.

The protein belongs to the triosephosphate isomerase family. In terms of assembly, homodimer.

It is found in the cytoplasm. It carries out the reaction D-glyceraldehyde 3-phosphate = dihydroxyacetone phosphate. It participates in carbohydrate biosynthesis; gluconeogenesis. It functions in the pathway carbohydrate degradation; glycolysis; D-glyceraldehyde 3-phosphate from glycerone phosphate: step 1/1. Functionally, involved in the gluconeogenesis. Catalyzes stereospecifically the conversion of dihydroxyacetone phosphate (DHAP) to D-glyceraldehyde-3-phosphate (G3P). This Vibrio cholerae serotype O1 (strain ATCC 39315 / El Tor Inaba N16961) protein is Triosephosphate isomerase.